A 406-amino-acid chain; its full sequence is Odorant receptor 10a (406 aa).

Residues 1–45 (MSEWLRFLKRDQQLDVYFFAVPRLSLDIMGYWPGKTGDTWPWRSL) are Cytoplasmic-facing. Residues 46-66 (IHFAILAIGVATELHAGMCFL) traverse the membrane as a helical segment. Topologically, residues 67-74 (DRQQITLA) are extracellular. A helical membrane pass occupies residues 75–95 (LETLCPAGTSAVTLLKMFLML). The Cytoplasmic portion of the chain corresponds to 96–143 (RFRQDLSIMWNRLRGLLFDPNWERPEQRDIRLKHSAMAARINFWPLSA). The helical transmembrane segment at 144 to 164 (GFFTCTTYNLKPILIAMILYL) threads the bilayer. The Extracellular portion of the chain corresponds to 165-189 (QNRYEDFVWFTPFNMTMPKVLLNYP). N178 carries an N-linked (GlcNAc...) asparagine glycan. Residues 190–210 (FFPLTYIFIAYTGYVTIFMFG) traverse the membrane as a helical segment. Topologically, residues 211–281 (GCDGFYFEFC…LTRFFRDRYT (71 aa)) are cytoplasmic. Residues 282-302 (IITLAHFVSAAMVIGFSMVNL) form a helical membrane-spanning segment. At 303 to 308 (LTLGNN) the chain is on the extracellular side. A helical transmembrane segment spans residues 309–329 (GLGAMLYVAYTVAALSQLLVY). Topologically, residues 330–372 (CYGGTLVAESSTGLCRAMFSCPWQLFKPKQRRLVQLLILRSQR) are cytoplasmic. Residues 373–393 (PVSMAVPFFSPSLATFAAILQ) form a helical membrane-spanning segment. Topologically, residues 394-406 (TSGSIIALVKSFQ) are extracellular.

It belongs to the insect chemoreceptor superfamily. Heteromeric odorant receptor channel (TC 1.A.69) family. Or1a subfamily. In terms of assembly, interacts with Orco. Complexes exist early in the endomembrane system in olfactory sensory neurons (OSNs), coupling these complexes to the conserved ciliary trafficking pathway. As to expression, expressed in olfactory sensory neurons in the antenna.

The protein localises to the cell membrane. Functionally, odorant receptor which mediates acceptance or avoidance behavior, depending on its substrates. The odorant receptor repertoire encodes a large collection of odor stimuli that vary widely in identity, intensity, and duration. May form a complex with Orco to form odorant-sensing units, providing sensitive and prolonged odorant signaling and calcium permeability. Involved in the behavioral responses to esters, and specifically to ethyl hexanoate, benzaldehyde, and acetophenone. The protein is Odorant receptor 10a (Or10a) of Drosophila melanogaster (Fruit fly).